We begin with the raw amino-acid sequence, 364 residues long: GTPase Obg (364 aa).

The Obg domain maps to 1 to 159; it reads MKFLDEAKVY…KTIWLHLKLI (159 aa). The OBG-type G domain maps to 160–327; the sequence is ADAGLVGLPN…VLRALRDIIV (168 aa). GTP is bound by residues 166–173, 191–195, 212–215, 279–282, and 308–310; these read GLPNAGKS, FTTLH, DIPG, SQID, and SAV. Residues serine 173 and threonine 193 each coordinate Mg(2+). The tract at residues 333–364 is disordered; it reads EKPAKVPKLRHRDMVVTDEGEDKGGDEGDDQP.

It belongs to the TRAFAC class OBG-HflX-like GTPase superfamily. OBG GTPase family. Monomer. Mg(2+) serves as cofactor.

Its subcellular location is the cytoplasm. Functionally, an essential GTPase which binds GTP, GDP and possibly (p)ppGpp with moderate affinity, with high nucleotide exchange rates and a fairly low GTP hydrolysis rate. Plays a role in control of the cell cycle, stress response, ribosome biogenesis and in those bacteria that undergo differentiation, in morphogenesis control. In Rhizobium johnstonii (strain DSM 114642 / LMG 32736 / 3841) (Rhizobium leguminosarum bv. viciae), this protein is GTPase Obg.